A 977-amino-acid chain; its full sequence is uncharacterized protein (977 aa).

The segment at 100 to 152 is disordered; the sequence is ATSPLQQNGKSRDTEKPPSMKEKDLSSNSSSQHDKAFHERVDQGKNKSSTTKY. Basic and acidic residues-rich tracts occupy residues 109–124 and 131–144; these read KSRDTEKPPSMKEKDL and QHDKAFHERVDQGK. S165 carries the phosphoserine modification. 2 stretches are compositionally biased toward polar residues: residues 166-175 and 183-193; these read PGQSVNSLKP and STKSSTSSEMH. Residues 166 to 194 are disordered; it reads PGQSVNSLKPNSGDEVPSTKSSTSSEMHT.

This is an uncharacterized protein from Schizosaccharomyces pombe (strain 972 / ATCC 24843) (Fission yeast).